The sequence spans 359 residues: DNA replication and repair protein RecF (359 aa).

30–37 (GPNGSGKT) contributes to the ATP binding site.

Belongs to the RecF family.

It localises to the cytoplasm. In terms of biological role, the RecF protein is involved in DNA metabolism; it is required for DNA replication and normal SOS inducibility. RecF binds preferentially to single-stranded, linear DNA. It also seems to bind ATP. The protein is DNA replication and repair protein RecF of Psychromonas ingrahamii (strain DSM 17664 / CCUG 51855 / 37).